The sequence spans 29 residues: Kunitz-type trypsin inhibitor IVTI (29 aa).

It belongs to the protease inhibitor I3 (leguminous Kunitz-type inhibitor) family. In terms of assembly, monomer and dimer.

Its function is as follows. Inhibits bovine trypsin but not chymotrypsin. Also inhibits trypsin-like enzymes from midgut of several lepidopteran species and inhibits larval development in those species. Has fungicidal activity against yeast C.buinensis. Has a bacteriostatic effect against E.coli. Is not cytotoxic. This chain is Kunitz-type trypsin inhibitor IVTI, found in Inga vera (River koko).